We begin with the raw amino-acid sequence, 548 residues long: MAKDIKFREDARARLEQGVNKLADTLKVTLGPKGRNVVLDKKFGSPQITNDGVTIARDIDLEDNYENMGAQLVKEVATQTNDVAGDGTTTATILAQAMVNEGIKNVTAGANPMIIRKGIQKAVDRAVEELQKNAVSVEDKESISQVASISANDEEVGKLIAEAMEKVGKDGVITVEESKSFKTDLNVVEGMQFDRGYVSPYMVTDNEKMEAHLEEPYILITDKKIGNIQEILPVLEKIVEQGKEVLLIAEDIEGEALATLVVNKLRGTFTCVGVKAPGFGDRRKAMLEDIAVLTGGQVISEDVGLELKNADISMLGRARQVTITKDDTTIVDGYGNEEDIQKRITQLRTQIEETTSDFDREKLEERLAKLAGGVAVVEVGAATETEMKEKKLRIEDALNSTRAAVEEGIVAGGGTALIDVLPSLEEVQADGDESTGVSIVRRALEEPVRQLAHNSGAEGSIVAEQVKQKGTNIGFNALENDYTNMLDAGVVDPKKVTRSALENAGSIAAMFLTTEAVVADLPDEDDNDDGDMGGGAPGMGGMGGMPGM.

ATP contacts are provided by residues 29–32 (TLGP), 86–90 (DGTTT), glycine 413, 476–478 (NAL), and aspartate 492. Residues 522-531 (PDEDDNDDGD) are compositionally biased toward acidic residues. Positions 522 to 548 (PDEDDNDDGDMGGGAPGMGGMGGMPGM) are disordered. The span at 532–548 (MGGGAPGMGGMGGMPGM) shows a compositional bias: gly residues.

The protein belongs to the chaperonin (HSP60) family. As to quaternary structure, forms a cylinder of 14 subunits composed of two heptameric rings stacked back-to-back. Interacts with the co-chaperonin GroES.

The protein resides in the cytoplasm. It catalyses the reaction ATP + H2O + a folded polypeptide = ADP + phosphate + an unfolded polypeptide.. Together with its co-chaperonin GroES, plays an essential role in assisting protein folding. The GroEL-GroES system forms a nano-cage that allows encapsulation of the non-native substrate proteins and provides a physical environment optimized to promote and accelerate protein folding. The protein is Chaperonin GroEL of Natranaerobius thermophilus (strain ATCC BAA-1301 / DSM 18059 / JW/NM-WN-LF).